The primary structure comprises 271 residues: Protein FAM110D (271 aa).

Disordered stretches follow at residues 1 to 83 (MLLA…RPDS), 116 to 145 (PRDA…APEA), and 186 to 245 (PQSW…PVSV). A compositionally biased stretch (basic residues) spans 68–78 (RPVRRGSGRRL). Positions 116 to 126 (PRDAAPSSPAS) are enriched in low complexity. A compositionally biased stretch (gly residues) spans 220-231 (SPGGAGGGGGSE).

Belongs to the FAM110 family.

The polypeptide is Protein FAM110D (FAM110D) (Homo sapiens (Human)).